Consider the following 527-residue polypeptide: Peptide chain release factor 3 (527 aa).

Residues 9 to 277 (AKRRTFAIIS…AVVDWAPRPL (269 aa)) enclose the tr-type G domain. Residues 18–25 (SHPDAGKT), 86–90 (DTPGH), and 140–143 (NKLD) each bind GTP.

The protein belongs to the TRAFAC class translation factor GTPase superfamily. Classic translation factor GTPase family. PrfC subfamily.

It is found in the cytoplasm. Functionally, increases the formation of ribosomal termination complexes and stimulates activities of RF-1 and RF-2. It binds guanine nucleotides and has strong preference for UGA stop codons. It may interact directly with the ribosome. The stimulation of RF-1 and RF-2 is significantly reduced by GTP and GDP, but not by GMP. This chain is Peptide chain release factor 3, found in Pseudomonas putida (strain ATCC 47054 / DSM 6125 / CFBP 8728 / NCIMB 11950 / KT2440).